Consider the following 334-residue polypeptide: Glycerol-3-phosphate dehydrogenase [NAD(P)+] (334 aa).

The NADPH site is built by W13, R33, and K106. Residues K106, G137, and S139 each coordinate sn-glycerol 3-phosphate. A141 provides a ligand contact to NADPH. Sn-glycerol 3-phosphate contacts are provided by K192, D245, S255, R256, and N257. The Proton acceptor role is filled by K192. R256 is a binding site for NADPH. V280 and E282 together coordinate NADPH.

This sequence belongs to the NAD-dependent glycerol-3-phosphate dehydrogenase family.

Its subcellular location is the cytoplasm. The catalysed reaction is sn-glycerol 3-phosphate + NAD(+) = dihydroxyacetone phosphate + NADH + H(+). It catalyses the reaction sn-glycerol 3-phosphate + NADP(+) = dihydroxyacetone phosphate + NADPH + H(+). It participates in membrane lipid metabolism; glycerophospholipid metabolism. In terms of biological role, catalyzes the reduction of the glycolytic intermediate dihydroxyacetone phosphate (DHAP) to sn-glycerol 3-phosphate (G3P), the key precursor for phospholipid synthesis. This Chlamydia trachomatis serovar L2 (strain ATCC VR-902B / DSM 19102 / 434/Bu) protein is Glycerol-3-phosphate dehydrogenase [NAD(P)+].